We begin with the raw amino-acid sequence, 300 residues long: MEIDLKDKIMKLKKEKNAVILAHFYQPKDVQEVADYIGDSYFLIDVGEKCKEDTIVFCGVKFMAESAKILSPNKKVIFPTPKAICPMANMITKEDVLKLKEKHPNAKVVCYINSTAEVKSVVDVCCTSSNAIEIVNNLESNEIIFLPDKNLGSYIQENTPNKKIILWDGYCYVHNKIKASDIIKAKEEYGNDINVLVHPECRKEVRELADYIGSTKGIINFAQNSNSKKYLIVTECGVIHELKKKNPDKEFYMLDMHCSNMKMNSIKEIYTCLKNYNNEVKIDENIKRKAVRALEKMHSL.

His23 and Ser40 together coordinate iminosuccinate. Cys85 contacts [4Fe-4S] cluster. Residues 111-113 (YIN) and Ser128 contribute to the iminosuccinate site. Cys171 contacts [4Fe-4S] cluster. Iminosuccinate contacts are provided by residues 198–200 (HPE) and Thr215. A [4Fe-4S] cluster-binding site is contributed by Cys258.

The protein belongs to the quinolinate synthase family. Type 2 subfamily. [4Fe-4S] cluster serves as cofactor.

The protein resides in the cytoplasm. It carries out the reaction iminosuccinate + dihydroxyacetone phosphate = quinolinate + phosphate + 2 H2O + H(+). Its pathway is cofactor biosynthesis; NAD(+) biosynthesis; quinolinate from iminoaspartate: step 1/1. In terms of biological role, catalyzes the condensation of iminoaspartate with dihydroxyacetone phosphate to form quinolinate. The protein is Quinolinate synthase of Clostridium novyi (strain NT).